The primary structure comprises 569 residues: Dihydroxy-acid dehydratase (569 aa).

Residue Cys61 participates in [2Fe-2S] cluster binding. Asp93 provides a ligand contact to Mg(2+). Cys134 is a binding site for [2Fe-2S] cluster. Residues Asp135 and Lys136 each coordinate Mg(2+). At Lys136 the chain carries N6-carboxylysine. Cys211 contributes to the [2Fe-2S] cluster binding site. Mg(2+) is bound at residue Glu462. Residue Ser488 is the Proton acceptor of the active site.

This sequence belongs to the IlvD/Edd family. In terms of assembly, homodimer. [2Fe-2S] cluster is required as a cofactor. It depends on Mg(2+) as a cofactor.

The enzyme catalyses (2R)-2,3-dihydroxy-3-methylbutanoate = 3-methyl-2-oxobutanoate + H2O. The catalysed reaction is (2R,3R)-2,3-dihydroxy-3-methylpentanoate = (S)-3-methyl-2-oxopentanoate + H2O. The protein operates within amino-acid biosynthesis; L-isoleucine biosynthesis; L-isoleucine from 2-oxobutanoate: step 3/4. It functions in the pathway amino-acid biosynthesis; L-valine biosynthesis; L-valine from pyruvate: step 3/4. Its function is as follows. Functions in the biosynthesis of branched-chain amino acids. Catalyzes the dehydration of (2R,3R)-2,3-dihydroxy-3-methylpentanoate (2,3-dihydroxy-3-methylvalerate) into 2-oxo-3-methylpentanoate (2-oxo-3-methylvalerate) and of (2R)-2,3-dihydroxy-3-methylbutanoate (2,3-dihydroxyisovalerate) into 2-oxo-3-methylbutanoate (2-oxoisovalerate), the penultimate precursor to L-isoleucine and L-valine, respectively. This Tropheryma whipplei (strain Twist) (Whipple's bacillus) protein is Dihydroxy-acid dehydratase.